A 155-amino-acid polypeptide reads, in one-letter code: Probable jacalin-related lectin 26 (155 aa).

A run of 2 helical transmembrane segments spans residues 26-48 (AYLYLSFHLKLLYSVPASYIAMI) and 127-149 (VSFVSITIIYFCVCVRSGQVLFL). The Jacalin-type lectin domain occupies 47–155 (MIRAGSVGKK…VLFLMKFKRS (109 aa)).

Belongs to the jacalin lectin family.

The protein resides in the membrane. This is Probable jacalin-related lectin 26 (JAL26) from Arabidopsis thaliana (Mouse-ear cress).